Reading from the N-terminus, the 522-residue chain is Tyrosine-protein phosphatase 1 (522 aa).

The interval 32-63 (RSNSSISLSSSSHSSFSRMGSLGSLPTNSGSS) is disordered. Residues 33–63 (SNSSISLSSSSHSSFSRMGSLGSLPTNSGSS) are compositionally biased toward low complexity. Residues 97–471 (IKEEFRLLEE…LFCYKTILDE (375 aa)) form the Tyrosine-protein phosphatase domain. The active-site Phosphocysteine intermediate is the cysteine 310. The PTPase insert (Asn-rich) stretch occupies residues 327–426 (MKKLDHYFKQ…DDAAESDLKY (100 aa)). Residues 382–410 (NNNNNNNLNNNNNINNNSNGSNNTPQTEP) are compositionally biased toward low complexity. A disordered region spans residues 382-420 (NNNNNNNLNNNNNINNNSNGSNNTPQTEPNNEEDDDDAA). A compositionally biased stretch (acidic residues) spans 411 to 420 (NNEEDDDDAA).

This sequence belongs to the protein-tyrosine phosphatase family. Non-receptor class subfamily. As to expression, expressed predominantly in anterior-like cells and to a lesser degree in prestalk cells.

Its subcellular location is the cytoplasm. The protein resides in the cell membrane. It carries out the reaction O-phospho-L-tyrosyl-[protein] + H2O = L-tyrosyl-[protein] + phosphate. Its function is as follows. May have a role in growth and in the early stages of development. Affects the timing of development. The protein is Tyrosine-protein phosphatase 1 (ptpA1-1) of Dictyostelium discoideum (Social amoeba).